The chain runs to 815 residues: Probable inorganic carbon transporter subunit DabA (815 aa).

Positions 334, 336, 507, and 522 each coordinate Zn(2+).

It belongs to the inorganic carbon transporter (TC 9.A.2) DabA family. Forms a complex with DabB. It depends on Zn(2+) as a cofactor.

It is found in the cell inner membrane. In terms of biological role, part of an energy-coupled inorganic carbon pump. The chain is Probable inorganic carbon transporter subunit DabA from Ectopseudomonas mendocina (strain ymp) (Pseudomonas mendocina).